Consider the following 263-residue polypeptide: Endonuclease 8 (263 aa).

Pro-2 acts as the Schiff-base intermediate with DNA in catalysis. Glu-3 serves as the catalytic Proton donor. The active-site Proton donor; for beta-elimination activity is the Lys-53. Gln-70, Arg-125, and Asn-169 together coordinate DNA. Residues 229-263 (KVFHRDGEACERCGGIIEKTTLSSRPFYWCPHCQK) form an FPG-type zinc finger. Catalysis depends on Arg-253, which acts as the Proton donor; for delta-elimination activity.

This sequence belongs to the FPG family. Zn(2+) serves as cofactor.

It catalyses the reaction 2'-deoxyribonucleotide-(2'-deoxyribose 5'-phosphate)-2'-deoxyribonucleotide-DNA = a 3'-end 2'-deoxyribonucleotide-(2,3-dehydro-2,3-deoxyribose 5'-phosphate)-DNA + a 5'-end 5'-phospho-2'-deoxyribonucleoside-DNA + H(+). Its function is as follows. Involved in base excision repair of DNA damaged by oxidation or by mutagenic agents. Acts as a DNA glycosylase that recognizes and removes damaged bases. Has a preference for oxidized pyrimidines, such as thymine glycol, 5,6-dihydrouracil and 5,6-dihydrothymine. Has AP (apurinic/apyrimidinic) lyase activity and introduces nicks in the DNA strand. Cleaves the DNA backbone by beta-delta elimination to generate a single-strand break at the site of the removed base with both 3'- and 5'-phosphates. The polypeptide is Endonuclease 8 (Salmonella enteritidis PT4 (strain P125109)).